The primary structure comprises 120 residues: NAD(P)H-quinone oxidoreductase subunit 3, chloroplastic (120 aa).

3 consecutive transmembrane segments (helical) span residues 9–29 (IFWA…IISG), 64–84 (MFAL…PWAM), and 88–108 (VLGV…IVGS).

This sequence belongs to the complex I subunit 3 family. As to quaternary structure, NDH is composed of at least 16 different subunits, 5 of which are encoded in the nucleus.

It localises to the plastid. Its subcellular location is the chloroplast thylakoid membrane. It catalyses the reaction a plastoquinone + NADH + (n+1) H(+)(in) = a plastoquinol + NAD(+) + n H(+)(out). The enzyme catalyses a plastoquinone + NADPH + (n+1) H(+)(in) = a plastoquinol + NADP(+) + n H(+)(out). Functionally, NDH shuttles electrons from NAD(P)H:plastoquinone, via FMN and iron-sulfur (Fe-S) centers, to quinones in the photosynthetic chain and possibly in a chloroplast respiratory chain. The immediate electron acceptor for the enzyme in this species is believed to be plastoquinone. Couples the redox reaction to proton translocation, and thus conserves the redox energy in a proton gradient. The sequence is that of NAD(P)H-quinone oxidoreductase subunit 3, chloroplastic from Lemna minor (Common duckweed).